Consider the following 744-residue polypeptide: 1,4-alpha-glucan branching enzyme GlgB (744 aa).

D415 acts as the Nucleophile in catalysis. The active-site Proton donor is the E468.

The protein belongs to the glycosyl hydrolase 13 family. GlgB subfamily. In terms of assembly, monomer.

It catalyses the reaction Transfers a segment of a (1-&gt;4)-alpha-D-glucan chain to a primary hydroxy group in a similar glucan chain.. The protein operates within glycan biosynthesis; glycogen biosynthesis. Its function is as follows. Catalyzes the formation of the alpha-1,6-glucosidic linkages in glycogen by scission of a 1,4-alpha-linked oligosaccharide from growing alpha-1,4-glucan chains and the subsequent attachment of the oligosaccharide to the alpha-1,6 position. The sequence is that of 1,4-alpha-glucan branching enzyme GlgB from Shewanella frigidimarina (strain NCIMB 400).